Reading from the N-terminus, the 580-residue chain is Probable mediator of RNA polymerase II transcription subunit 26a (580 aa).

The TFIIS N-terminal domain occupies 108-183 (DEVMRIRDIL…AEWKRLVDQW (76 aa)). 3 stretches are compositionally biased toward basic and acidic residues: residues 244 to 255 (RHSVESKHERKS), 280 to 290 (QTRREEADVRP), and 299 to 309 (VEPKRQTKQSR). The interval 244–337 (RHSVESKHER…RKLAGPQQDK (94 aa)) is disordered. The stretch at 347 to 368 (FEFAKRKLQESYHQHENAKRQR) forms a coiled coil.

This sequence belongs to the Mediator complex subunit 26 family. As to quaternary structure, component of the Mediator complex.

It is found in the nucleus. Functionally, component of the Mediator complex, a coactivator involved in the regulated transcription of nearly all RNA polymerase II-dependent genes. Mediator functions as a bridge to convey information from gene-specific regulatory proteins to the basal RNA polymerase II transcription machinery. The Mediator complex, having a compact conformation in its free form, is recruited to promoters by direct interactions with regulatory proteins and serves for the assembly of a functional preinitiation complex with RNA polymerase II and the general transcription factors. May play a role in transcription elongation. The chain is Probable mediator of RNA polymerase II transcription subunit 26a (MED26A) from Arabidopsis thaliana (Mouse-ear cress).